A 193-amino-acid chain; its full sequence is CDP-diacylglycerol--glycerol-3-phosphate 3-phosphatidyltransferase (193 aa).

4 helical membrane-spanning segments follow: residues 8–28 (ITLA…APFD), 39–59 (IPVA…TDWV), 88–108 (AALI…IVII), and 157–177 (LVSF…TVVS).

It belongs to the CDP-alcohol phosphatidyltransferase class-I family.

It localises to the cell membrane. It catalyses the reaction a CDP-1,2-diacyl-sn-glycerol + sn-glycerol 3-phosphate = a 1,2-diacyl-sn-glycero-3-phospho-(1'-sn-glycero-3'-phosphate) + CMP + H(+). It functions in the pathway phospholipid metabolism; phosphatidylglycerol biosynthesis; phosphatidylglycerol from CDP-diacylglycerol: step 1/2. In terms of biological role, this protein catalyzes the committed step to the synthesis of the acidic phospholipids. This Bacillus subtilis (strain 168) protein is CDP-diacylglycerol--glycerol-3-phosphate 3-phosphatidyltransferase (pgsA).